The primary structure comprises 78 residues: Acyl carrier protein (78 aa).

The Carrier domain maps to Met1 to Lys76. At Ser36 the chain carries O-(pantetheine 4'-phosphoryl)serine.

The protein belongs to the acyl carrier protein (ACP) family. In terms of processing, 4'-phosphopantetheine is transferred from CoA to a specific serine of apo-ACP by AcpS. This modification is essential for activity because fatty acids are bound in thioester linkage to the sulfhydryl of the prosthetic group.

It localises to the cytoplasm. It participates in lipid metabolism; fatty acid biosynthesis. Carrier of the growing fatty acid chain in fatty acid biosynthesis. In Helicobacter pylori (strain ATCC 700392 / 26695) (Campylobacter pylori), this protein is Acyl carrier protein.